Consider the following 420-residue polypeptide: Protein disulfide isomerase CRELD1 (420 aa).

The signal sequence occupies residues 1–29; the sequence is MAPWPPKGLVPAMLWGLSLFLNLPGPIWL. Residues 30-362 lie on the Extracellular side of the membrane; it reads QPSPPPQSSP…GFFSEMTEDE (333 aa). A CXXC motif is present at residues 46-49; it reads CHTC. An intrachain disulfide couples cysteine 46 to cysteine 49. An N-linked (GlcNAc...) asparagine glycan is attached at asparagine 79. The EGF-like 1 domain maps to 153–193; the sequence is LPCPGGTERPCGGYGQCEGEGTRGGSGHCDCQAGYGGEACG. Intrachain disulfides connect cysteine 155-cysteine 169, cysteine 163-cysteine 181, and cysteine 183-cysteine 192. N-linked (GlcNAc...) asparagine glycosylation is present at asparagine 205. FU repeat units lie at residues 208 to 256 and 268 to 315; these read HLVC…GANC and SYEC…EVCP. Residues 278–281 carry the CXXC motif; the sequence is CLGC. Disulfide bonds link cysteine 278–cysteine 281, cysteine 309–cysteine 321, cysteine 314–cysteine 330, and cysteine 332–cysteine 343. The 40-residue stretch at 305 to 344 folds into the EGF-like 2; calcium-binding domain; the sequence is DVDECETEVCPGENKQCENTEGGYRCICAEGYKQMEGICV. The helical transmembrane segment at 363 to 383 threads the bilayer; sequence LVVLQQMFFGIIICALATLAA. A topological domain (cytoplasmic) is located at residue lysine 384. A helical transmembrane segment spans residues 385 to 405; the sequence is GDLVFTAIFIGAVAAMTGYWL. The Extracellular portion of the chain corresponds to 406-420; that stretch reads SERSDRVLEGFIKGR.

The protein belongs to the CRELD family. In terms of tissue distribution, highly expressed in fetal lung, liver, kidney, adult heart, brain and skeletal muscle. Weakly expressed in placenta, fetal brain, and adult lung, liver, kidney and pancreas.

It is found in the membrane. The catalysed reaction is Catalyzes the rearrangement of -S-S- bonds in proteins.. Functionally, protein disulfide isomerase. Promotes the localization of acetylcholine receptors (AChRs) to the plasma membrane. The protein is Protein disulfide isomerase CRELD1 (CRELD1) of Homo sapiens (Human).